Consider the following 983-residue polypeptide: Chaperone protein ClpB3, mitochondrial (983 aa).

A mitochondrion-targeting transit peptide spans methionine 1 to tyrosine 87. Residues proline 97–serine 240 form the Clp R domain. 2 repeat regions span residues phenylalanine 100–glutamine 165 and isoleucine 177–serine 240. The i stretch occupies residues leucine 255 to proline 503. Residue glycine 300–threonine 307 coordinates ATP. Positions isoleucine 504–glutamate 627 form a coiled coil. The tract at residues valine 629–serine 820 is II. ATP is bound at residue glycine 703–threonine 710.

This sequence belongs to the ClpA/ClpB family.

The protein localises to the mitochondrion. Molecular chaperone that may not be involved in heat stress response or tolerance. This is Chaperone protein ClpB3, mitochondrial (CLPB3) from Oryza sativa subsp. japonica (Rice).